The sequence spans 377 residues: Erythronate-4-phosphate dehydrogenase (377 aa).

2 residues coordinate substrate: Ser-59 and Thr-81. Asp-162 provides a ligand contact to NAD(+). The active site involves Arg-237. Position 260 (Asp-260) interacts with NAD(+). Glu-265 is a catalytic residue. His-282 serves as the catalytic Proton donor. Gly-285 contributes to the NAD(+) binding site. Residue Tyr-286 coordinates substrate.

The protein belongs to the D-isomer specific 2-hydroxyacid dehydrogenase family. PdxB subfamily. As to quaternary structure, homodimer.

It localises to the cytoplasm. The catalysed reaction is 4-phospho-D-erythronate + NAD(+) = (R)-3-hydroxy-2-oxo-4-phosphooxybutanoate + NADH + H(+). Its pathway is cofactor biosynthesis; pyridoxine 5'-phosphate biosynthesis; pyridoxine 5'-phosphate from D-erythrose 4-phosphate: step 2/5. Catalyzes the oxidation of erythronate-4-phosphate to 3-hydroxy-2-oxo-4-phosphonooxybutanoate. The chain is Erythronate-4-phosphate dehydrogenase from Psychrobacter arcticus (strain DSM 17307 / VKM B-2377 / 273-4).